The chain runs to 540 residues: Aquaporin-5 (540 aa).

The tract at residues methionine 1 to serine 224 is disordered. At methionine 1–histidine 263 the chain is on the cytoplasmic side. The span at proline 25 to lysine 44 shows a compositional bias: polar residues. Composition is skewed to basic and acidic residues over residues arginine 119 to asparagine 133, arginine 140 to arginine 155, tyrosine 174 to arginine 194, and serine 204 to aspartate 214. The chain crosses the membrane as a helical span at residues phenylalanine 264 to glycine 284. The Extracellular segment spans residues threonine 285–alanine 308. A glycan (N-linked (GlcNAc...) asparagine) is linked at asparagine 296. The chain crosses the membrane as a helical span at residues valine 309–phenylalanine 329. Residues arginine 330–serine 332 are Cytoplasmic-facing. A helical membrane pass occupies residues glycine 333–proline 353. Residues arginine 354–alanine 356 lie on the Extracellular side of the membrane. A helical transmembrane segment spans residues cysteine 357–phenylalanine 377. The Cytoplasmic portion of the chain corresponds to proline 378–threonine 393. The helical transmembrane segment at valine 394–leucine 414 threads the bilayer. Residues alanine 415–lysine 420 are Extracellular-facing. The chain crosses the membrane as a helical span at residues alanine 421–valine 441. Residues tyrosine 442 to histidine 467 lie on the Cytoplasmic side of the membrane. The chain crosses the membrane as a helical span at residues tryptophan 468–isoleucine 488. Residues lysine 489–serine 540 lie on the Extracellular side of the membrane. Residues glycine 499–serine 540 are disordered. Residues glycine 502–asparagine 530 show a composition bias toward basic and acidic residues. Asparagine 530 carries an N-linked (GlcNAc...) asparagine glycan.

This sequence belongs to the MIP/aquaporin (TC 1.A.8) family.

The protein localises to the membrane. It carries out the reaction H2O(in) = H2O(out). Water channel required to facilitate the transport of water across membranes. May play a role in the vegetative growth. This Botryotinia fuckeliana (strain B05.10) (Noble rot fungus) protein is Aquaporin-5.